Consider the following 754-residue polypeptide: 5-methyltetrahydropteroyltriglutamate--homocysteine methyltransferase (754 aa).

Residues 17–20 and Lys-117 each bind 5-methyltetrahydropteroyltri-L-glutamate; that span reads RELK. L-homocysteine contacts are provided by residues 431–433 and Glu-484; that span reads IGS. Residues 431–433 and Glu-484 contribute to the L-methionine site; that span reads IGS. Residues 515–516 and Trp-561 each bind 5-methyltetrahydropteroyltri-L-glutamate; that span reads RC. An L-homocysteine-binding site is contributed by Asp-599. Asp-599 provides a ligand contact to L-methionine. Glu-605 is a binding site for 5-methyltetrahydropteroyltri-L-glutamate. The Zn(2+) site is built by His-641, Cys-643, and Glu-665. His-694 functions as the Proton donor in the catalytic mechanism. Cys-726 serves as a coordination point for Zn(2+).

This sequence belongs to the vitamin-B12 independent methionine synthase family. The cofactor is Zn(2+).

It catalyses the reaction 5-methyltetrahydropteroyltri-L-glutamate + L-homocysteine = tetrahydropteroyltri-L-glutamate + L-methionine. It participates in amino-acid biosynthesis; L-methionine biosynthesis via de novo pathway; L-methionine from L-homocysteine (MetE route): step 1/1. Functionally, catalyzes the transfer of a methyl group from 5-methyltetrahydrofolate to homocysteine resulting in methionine formation. This chain is 5-methyltetrahydropteroyltriglutamate--homocysteine methyltransferase, found in Klebsiella pneumoniae subsp. pneumoniae (strain ATCC 700721 / MGH 78578).